Consider the following 448-residue polypeptide: Vitamin D3 receptor (448 aa).

Positions 41 to 116 (PRICGVCGDR…IGMMKEFILT (76 aa)) form a DNA-binding region, nuclear receptor. 8 residues coordinate Zn(2+): Cys-44, Cys-47, Cys-61, Cys-64, Cys-80, Cys-86, Cys-96, and Cys-99. NR C4-type zinc fingers lie at residues 44–64 (CGVC…CEGC) and 80–104 (CPFS…LKRC). Residues 117 to 146 (DEEVQRKREMILKRKEEEALKESLKPKLSE) are hinge. The 298-residue stretch at 147-444 (EQQKVINILL…LTPLVLEVFG (298 aa)) folds into the NR LBD domain. Ser-258 serves as a coordination point for calcitriol. Residues 267–285 (KMIPGFRDLTAEDQIALLK) are interaction with coactivator LXXLL motif. Residues Arg-295, Ser-299, His-326, and His-418 each contribute to the calcitriol site. The short motif at 437–445 (PLVLEVFGN) is the 9aaTAD element.

Belongs to the nuclear hormone receptor family. NR1 subfamily. As to quaternary structure, homodimer in the absence of bound vitamin D3. Heterodimer with RXRA after vitamin D3 binding.

It is found in the nucleus. The protein resides in the cytoplasm. In terms of biological role, nuclear receptor for calcitriol, the active form of vitamin D3 which mediates the action of this vitamin on cells. Enters the nucleus upon vitamin D3 binding where it forms heterodimers with the retinoid X receptor/RXR. The VDR-RXR heterodimers bind to specific response elements on DNA and activate the transcription of vitamin D3-responsive target genes. Plays a central role in calcium homeostasis. Also functions as a receptor for the secondary bile acid lithocholic acid (LCA) and its metabolites. In Coturnix japonica (Japanese quail), this protein is Vitamin D3 receptor (VDR).